The following is a 478-amino-acid chain: Isoeugenol monooxygenase (478 aa).

Fe cation is bound by residues H167, H218, H282, and H471.

Belongs to the carotenoid oxygenase family. As to quaternary structure, monomer. It depends on Fe(2+) as a cofactor.

It carries out the reaction (E)-isoeugenol + O2 = vanillin + acetaldehyde. With respect to regulation, inhibited by HgCl(2), AgNO(3), CuCl(2), phenylhydrazine, 8-hydroxyquinoline, R-cycloserine and p-chloromercuribenzoic acid. In terms of biological role, involved in isoeugenol degradation. Catalyzes the oxidative cleavage of the side chain double-bond of isoeugenol to form vanillin and acetaldehyde. The protein is Isoeugenol monooxygenase of Pseudomonas putida (Arthrobacter siderocapsulatus).